Consider the following 161-residue polypeptide: NAD(P)H-quinone oxidoreductase subunit I, chloroplastic (161 aa).

2 consecutive 4Fe-4S ferredoxin-type domains span residues 55–84 and 95–124; these read GRIH…VDWK and LNYS…MTEE. [4Fe-4S] cluster-binding residues include cysteine 64, cysteine 67, cysteine 70, cysteine 74, cysteine 104, cysteine 107, cysteine 110, and cysteine 114.

Belongs to the complex I 23 kDa subunit family. NDH is composed of at least 16 different subunits, 5 of which are encoded in the nucleus. The cofactor is [4Fe-4S] cluster.

The protein localises to the plastid. It localises to the chloroplast thylakoid membrane. It catalyses the reaction a plastoquinone + NADH + (n+1) H(+)(in) = a plastoquinol + NAD(+) + n H(+)(out). It carries out the reaction a plastoquinone + NADPH + (n+1) H(+)(in) = a plastoquinol + NADP(+) + n H(+)(out). NDH shuttles electrons from NAD(P)H:plastoquinone, via FMN and iron-sulfur (Fe-S) centers, to quinones in the photosynthetic chain and possibly in a chloroplast respiratory chain. The immediate electron acceptor for the enzyme in this species is believed to be plastoquinone. Couples the redox reaction to proton translocation, and thus conserves the redox energy in a proton gradient. The polypeptide is NAD(P)H-quinone oxidoreductase subunit I, chloroplastic (Lotus japonicus (Lotus corniculatus var. japonicus)).